The primary structure comprises 270 residues: Putative pyruvate, phosphate dikinase regulatory protein (270 aa).

151 to 158 (GVSRTSKT) lines the ADP pocket.

It belongs to the pyruvate, phosphate/water dikinase regulatory protein family. PDRP subfamily.

The enzyme catalyses N(tele)-phospho-L-histidyl/L-threonyl-[pyruvate, phosphate dikinase] + ADP = N(tele)-phospho-L-histidyl/O-phospho-L-threonyl-[pyruvate, phosphate dikinase] + AMP + H(+). It catalyses the reaction N(tele)-phospho-L-histidyl/O-phospho-L-threonyl-[pyruvate, phosphate dikinase] + phosphate + H(+) = N(tele)-phospho-L-histidyl/L-threonyl-[pyruvate, phosphate dikinase] + diphosphate. Bifunctional serine/threonine kinase and phosphorylase involved in the regulation of the pyruvate, phosphate dikinase (PPDK) by catalyzing its phosphorylation/dephosphorylation. In Lysinibacillus sphaericus (strain C3-41), this protein is Putative pyruvate, phosphate dikinase regulatory protein.